The primary structure comprises 376 residues: Succinyl-diaminopimelate desuccinylase (376 aa).

H66 serves as a coordination point for Zn(2+). Residue D68 is part of the active site. D99 contacts Zn(2+). Catalysis depends on E133, which acts as the Proton acceptor. E134, E162, and H348 together coordinate Zn(2+).

Belongs to the peptidase M20A family. DapE subfamily. In terms of assembly, homodimer. Zn(2+) serves as cofactor. It depends on Co(2+) as a cofactor.

It catalyses the reaction N-succinyl-(2S,6S)-2,6-diaminopimelate + H2O = (2S,6S)-2,6-diaminopimelate + succinate. It functions in the pathway amino-acid biosynthesis; L-lysine biosynthesis via DAP pathway; LL-2,6-diaminopimelate from (S)-tetrahydrodipicolinate (succinylase route): step 3/3. In terms of biological role, catalyzes the hydrolysis of N-succinyl-L,L-diaminopimelic acid (SDAP), forming succinate and LL-2,6-diaminopimelate (DAP), an intermediate involved in the bacterial biosynthesis of lysine and meso-diaminopimelic acid, an essential component of bacterial cell walls. This Xanthomonas euvesicatoria pv. vesicatoria (strain 85-10) (Xanthomonas campestris pv. vesicatoria) protein is Succinyl-diaminopimelate desuccinylase.